The primary structure comprises 149 residues: SsrA-binding protein (149 aa).

The protein belongs to the SmpB family.

It is found in the cytoplasm. In terms of biological role, required for rescue of stalled ribosomes mediated by trans-translation. Binds to transfer-messenger RNA (tmRNA), required for stable association of tmRNA with ribosomes. tmRNA and SmpB together mimic tRNA shape, replacing the anticodon stem-loop with SmpB. tmRNA is encoded by the ssrA gene; the 2 termini fold to resemble tRNA(Ala) and it encodes a 'tag peptide', a short internal open reading frame. During trans-translation Ala-aminoacylated tmRNA acts like a tRNA, entering the A-site of stalled ribosomes, displacing the stalled mRNA. The ribosome then switches to translate the ORF on the tmRNA; the nascent peptide is terminated with the 'tag peptide' encoded by the tmRNA and targeted for degradation. The ribosome is freed to recommence translation, which seems to be the essential function of trans-translation. In Mesoplasma florum (strain ATCC 33453 / NBRC 100688 / NCTC 11704 / L1) (Acholeplasma florum), this protein is SsrA-binding protein.